Consider the following 111-residue polypeptide: Nucleoid-associated protein Cag_1190 (111 aa).

It belongs to the YbaB/EbfC family. In terms of assembly, homodimer.

It localises to the cytoplasm. Its subcellular location is the nucleoid. Its function is as follows. Binds to DNA and alters its conformation. May be involved in regulation of gene expression, nucleoid organization and DNA protection. The chain is Nucleoid-associated protein Cag_1190 from Chlorobium chlorochromatii (strain CaD3).